The chain runs to 234 residues: Purine nucleoside phosphorylase DeoD-type (234 aa).

An a purine D-ribonucleoside-binding site is contributed by His-4. Residues Gly-20, Arg-24, Arg-43, and 87–90 contribute to the phosphate site; that span reads RIGS. A purine D-ribonucleoside is bound by residues Glu-162, 179–181, and 203–204; these read EME and SD. Catalysis depends on Asp-204, which acts as the Proton donor.

The protein belongs to the PNP/UDP phosphorylase family. Homohexamer; trimer of homodimers.

It catalyses the reaction a purine D-ribonucleoside + phosphate = a purine nucleobase + alpha-D-ribose 1-phosphate. The enzyme catalyses a purine 2'-deoxy-D-ribonucleoside + phosphate = a purine nucleobase + 2-deoxy-alpha-D-ribose 1-phosphate. Functionally, catalyzes the reversible phosphorolytic breakdown of the N-glycosidic bond in the beta-(deoxy)ribonucleoside molecules, with the formation of the corresponding free purine bases and pentose-1-phosphate. The chain is Purine nucleoside phosphorylase DeoD-type from Jannaschia sp. (strain CCS1).